A 600-amino-acid chain; its full sequence is DDB1- and CUL4-associated factor 15 (600 aa).

Residues 1 to 30 (MAPSSKSERNSGAGSGGGGPGGAGGKRAAG) are disordered. Over residues 13-27 (AGSGGGGPGGAGGKR) the composition is skewed to gly residues. S50 is modified (phosphoserine). Zn(2+) contacts are provided by C193, C196, C211, and H214. Residues F231 and 234 to 235 (AF) contribute to the E7820 site. Positions 280–295 (PASPPEPQSPELPPAL) are enriched in pro residues. The disordered stretch occupies residues 280-316 (PASPPEPQSPELPPALPSFCPEAAPARSSGSPEPSPA). Phosphoserine occurs at positions 310 and 314.

In terms of assembly, component of the DCX(DCAF15) complex, also named CLR4(DCAF15) complex, composed of DCAF15, DDB1, cullin-4 (CUL4A or CUL4B), DDA1 and RBX1.

It participates in protein modification; protein ubiquitination. Its activity is regulated as follows. Aryl sulfonamide anticancer drugs change the substrate specificity of DCAF15 by acting as a molecular glue that promotes binding between DCAF15 and weak affinity interactors, such as RBM39. Functionally, substrate-recognition component of the DCX(DCAF15) complex, a cullin-4-RING E3 ubiquitin-protein ligase complex that mediates ubiquitination and degradation of target proteins. The DCX(DCAF15) complex acts as a regulator of the natural killer (NK) cells effector functions, possibly by mediating ubiquitination and degradation of cohesin subunits SMC1A and SMC3. May play a role in the activation of antigen-presenting cells (APC) and their interaction with NK cells. Its function is as follows. Binding of aryl sulfonamide anticancer drugs, such as indisulam (E7070) or E7820, change the substrate specificity of the DCX(DCAF15) complex, leading to promote ubiquitination and degradation of splicing factor RBM39. RBM39 degradation results in splicing defects and death in cancer cell lines. Aryl sulfonamide anticancer drugs change the substrate specificity of DCAF15 by acting as a molecular glue that promotes binding between DCAF15 and weak affinity interactor RBM39. Aryl sulfonamide anticancer drugs also promote ubiquitination and degradation of RBM23 and PRPF39. The polypeptide is DDB1- and CUL4-associated factor 15 (Homo sapiens (Human)).